The following is a 1095-amino-acid chain: Collagen, type I, alpha 1a (1095 aa).

Residues 1 to 21 are compositionally biased toward pro residues; the sequence is SPAMPVPGPMGPMGPRGPPGS. A disordered region spans residues 1 to 1011; it reads SPAMPVPGPM…QPQEKAPDPY (1011 aa). Residues 22–49 show a composition bias toward low complexity; sequence PGASGPQGFTGPPGEPGEAGSAGAMGPR. The segment covering 58 to 72 has biased composition (basic and acidic residues); that stretch reads NGEDGESGKPGRGGE. A compositionally biased stretch (low complexity) spans 127–145; the sequence is TGAAGAAGARGNDGAAGAA. Over residues 147-160 the composition is skewed to pro residues; the sequence is PPGPTGPAGPPGFP. The segment covering 161 to 179 has biased composition (gly residues); that stretch reads GGPGAKGDAGAQGGRGPEG. Low complexity-rich tracts occupy residues 180–223, 232–270, and 288–297; these read PAGA…AGAP, SGPQGAAGAPGPKGNTGEVGAPGAKGEAGAKGEAGAPGV, and EPGAAGARGA. Gly residues predominate over residues 299–311; sequence GERGGPGGRGFPG. 4 stretches are compositionally biased toward low complexity: residues 385–400, 477–489, 498–544, and 577–592; these read VGARGQPGVMGFPGPK, LPGEAGATGPAGA, ERGA…QGMP, and RGLTGPLGLPGPAGAT. Over residues 602 to 611 the composition is skewed to gly residues; that stretch reads GPVGPGGARG. Composition is skewed to low complexity over residues 625–661 and 675–697; these read AGFAGPPGADGQPGAKGEAGDNGAKGDAGPPGAAGPT and PKGARGAAGPPGATGFPGAAGRV. The span at 699-712 shows a compositional bias: pro residues; that stretch reads PPGPSGNPGPPGPA. The segment covering 804–822 has biased composition (low complexity); it reads PGLAGAPGEPGREGSPGNE. Positions 848–858 are enriched in pro residues; it reads APGPPGAPGPV. Over residues 872 to 893 the composition is skewed to low complexity; it reads PAGPAGSAGPAGPRGPAGALGL. Over residues 894-908 the composition is skewed to basic and acidic residues; sequence RGDKGESGEAGERGM. The segment covering 924 to 960 has biased composition (low complexity); sequence AGSSGEQGPAGAAGPAGPRGPAGSAGSPGKDGMSGLP. Over residues 976–988 the composition is skewed to pro residues; the sequence is AGPPGPPGPPGAP. A Fibrillar collagen NC1 domain is found at 1062 to 1095; the sequence is TGTWGKLPLLDLAPMDVGAPDQEFGLEVGPVCFL.

The protein belongs to the fibrillar collagen family.

It localises to the secreted. Its subcellular location is the extracellular space. It is found in the extracellular matrix. The sequence is that of Collagen, type I, alpha 1a from Epinephelus caninus (Dogtooth grouper).